The primary structure comprises 248 residues: Inhibitor of growth protein 4 (248 aa).

A coiled-coil region spans residues 25–118; that stretch reads FQLMRDLDQR…ADLKEKQIES (94 aa). N6-acetyllysine occurs at positions 112, 127, and 129. The tract at residues 115 to 160 is disordered; it reads QIESSDYDSSSSKGKKSRTQKEKKAARARSKGKNSDEEAPKAAQKK. Positions 127–147 match the Bipartite nuclear localization signal motif; sequence KGKKSRTQKEKKAARARSKGK. Residue Arg-132 is modified to Citrulline. 3 positions are modified to N6-acetyllysine: Lys-145, Lys-147, and Lys-155. Arg-165 carries the post-translational modification Citrulline. A PHD-type zinc finger spans residues 195–244; sequence PTYCLCHQVSYGEMIGCDNPDCSIERFHFACVGLTTKPRGKWFCPRCSQE. Positions 198, 200, 211, 216, 222, 225, 238, and 241 each coordinate Zn(2+).

The protein belongs to the ING family. In terms of assembly, homodimer. Component of the HBO1 complex composed of KAT7/HBO1, MEAF6, ING4 or ING5, and one scaffold subunit: complexes containing BRPF scaffold (BRPF1, BRD1/BRPF2 or BRPF3) direct KAT7/HBO1 specificity towards H3K14ac, while complexes containing JADE scaffold (JADE1, JADE2 and JADE3) mediate acetylation of histone H4. Interacts with H3K4me3 and to a lesser extent with H3K4me2, the interaction augments KAT7/HBO1 acetylation activity on H3 tails. Interacts with EP300, RELA and TP53; these interactions may be indirect. Interacts with EGLN1. Interacts with BCL2A1. Post-translationally, citrullination by PADI4 within the nuclear localization signal disrupts the interaction with p53 and increases susceptibility to degradation.

The protein resides in the nucleus. Component of HBO1 complexes, which specifically mediate acetylation of histone H3 at 'Lys-14' (H3K14ac), and have reduced activity toward histone H4. Through chromatin acetylation it may function in DNA replication. May inhibit tumor progression by modulating the transcriptional output of signaling pathways which regulate cell proliferation. Can suppress brain tumor angiogenesis through transcriptional repression of RELA/NFKB3 target genes when complexed with RELA. May also specifically suppress loss of contact inhibition elicited by activated oncogenes such as MYC. Represses hypoxia inducible factor's (HIF) activity by interacting with HIF prolyl hydroxylase 2 (EGLN1). Can enhance apoptosis induced by serum starvation in mammary epithelial cell line HC11. In Bos taurus (Bovine), this protein is Inhibitor of growth protein 4 (ING4).